Reading from the N-terminus, the 464-residue chain is Soluble pyridine nucleotide transhydrogenase (464 aa).

35–44 (DSRRQVGGNC) provides a ligand contact to FAD.

It belongs to the class-I pyridine nucleotide-disulfide oxidoreductase family. Requires FAD as cofactor.

It is found in the cytoplasm. It catalyses the reaction NAD(+) + NADPH = NADH + NADP(+). In terms of biological role, conversion of NADPH, generated by peripheral catabolic pathways, to NADH, which can enter the respiratory chain for energy generation. The sequence is that of Soluble pyridine nucleotide transhydrogenase from Pseudomonas fluorescens (strain ATCC BAA-477 / NRRL B-23932 / Pf-5).